The primary structure comprises 914 residues: Calcium-activated chloride channel regulator 1 (914 aa).

The first 21 residues, 1-21, serve as a signal peptide directing secretion; that stretch reads MGPFKSSVFILILHLLEGALS. Residues 46 to 199 form a metalloprotease domain region; sequence DETLIQQIKD…GITGTNVVKK (154 aa). A Zn(2+)-binding site is contributed by histidine 156. Residue glutamate 157 is part of the active site. Residues histidine 160 and aspartate 167 each contribute to the Zn(2+) site. In terms of domain architecture, VWFA spans 306–475; that stretch reads IVCLVLDKSG…NGLIDAFGAL (170 aa). Asparagine 503, asparagine 585, asparagine 770, asparagine 804, asparagine 810, asparagine 831, asparagine 836, and asparagine 890 each carry an N-linked (GlcNAc...) asparagine glycan.

The protein belongs to the CLCR family. Post-translationally, glycosylated. The 125-kDa product is autoproteolytically processed by the metalloprotease domain and yields to two cell-surface-associated subunits, a 90-kDa protein and a group of 37- to 41-kDa proteins. The cleavage is necessary for calcium-activated chloride channel (CaCC) activation activity. Highly expressed in small intestine and colon namely in intestinal basal crypt epithelia and goblet cells, and appendix. Weakly expressed in uterus, testis and kidney. Expressed in the airways epithelium of both asthmatic and healthy patients. Expressed in the bronchial epithelium, especially in mucus-producing goblet cells. Expressed in normal turbinate mucosa and nasal polyp. Expressed in.

The protein resides in the secreted. The protein localises to the extracellular space. Its subcellular location is the cell membrane. Its function is as follows. May be involved in mediating calcium-activated chloride conductance. May play critical roles in goblet cell metaplasia, mucus hypersecretion, cystic fibrosis and AHR. May be involved in the regulation of mucus production and/or secretion by goblet cells. Involved in the regulation of tissue inflammation in the innate immune response. May play a role as a tumor suppressor. Induces MUC5AC. This is Calcium-activated chloride channel regulator 1 (CLCA1) from Homo sapiens (Human).